The following is a 164-amino-acid chain: MRVGVYPGSFDPITKGHLDLIERAASKFDKVIVAVLININKKGMFSIEERVNLIEKCVAKYNNVEVKSFNGLLIDFVRKEKADVIIKGLRSVTDFEYEFQMALMNRELANEVETVFMVTSPNYSYISSSAIKQVASFNGEIKNFVPKEIVEDLEERISSLRGEG.

A substrate-binding site is contributed by serine 9. ATP-binding positions include 9-10 and histidine 17; that span reads SF. Substrate-binding residues include lysine 41, leucine 73, and lysine 87. Residues 88-90, glutamate 98, and 123-129 each bind ATP; these read GLR and YSYISSS.

This sequence belongs to the bacterial CoaD family. Homohexamer. Requires Mg(2+) as cofactor.

The protein resides in the cytoplasm. It catalyses the reaction (R)-4'-phosphopantetheine + ATP + H(+) = 3'-dephospho-CoA + diphosphate. Its pathway is cofactor biosynthesis; coenzyme A biosynthesis; CoA from (R)-pantothenate: step 4/5. Reversibly transfers an adenylyl group from ATP to 4'-phosphopantetheine, yielding dephospho-CoA (dPCoA) and pyrophosphate. The sequence is that of Phosphopantetheine adenylyltransferase from Clostridium perfringens (strain ATCC 13124 / DSM 756 / JCM 1290 / NCIMB 6125 / NCTC 8237 / Type A).